The primary structure comprises 86 residues: uncharacterized protein (86 aa).

The N-terminal stretch at Met-1–Ala-25 is a signal peptide.

This is an uncharacterized protein from Bacillus subtilis (strain 168).